We begin with the raw amino-acid sequence, 324 residues long: Lactonase drp35 (324 aa).

Positions 47, 109, 111, 129, 132, 134, 137, 184, 235, and 236 each coordinate Ca(2+). The active-site Proton donor is Asp235.

It belongs to the SMP-30/CGR1 family. The cofactor is Ca(2+).

The protein resides in the cytoplasm. Exhibits lactonase activity. Acts in cells with perturbed membrane integrity and is possibly related to the membrane homeostasis. The polypeptide is Lactonase drp35 (drp35) (Staphylococcus aureus (strain MRSA252)).